The primary structure comprises 31 residues: Cytochrome b6-f complex subunit 6 (31 aa).

The chain crosses the membrane as a helical span at residues 4-26 (ITSYFGFLLAALTITPALLISLN).

The protein belongs to the PetL family. The 4 large subunits of the cytochrome b6-f complex are cytochrome b6, subunit IV (17 kDa polypeptide, PetD), cytochrome f and the Rieske protein, while the 4 small subunits are PetG, PetL, PetM and PetN. The complex functions as a dimer.

The protein localises to the plastid. It localises to the chloroplast thylakoid membrane. Its function is as follows. Component of the cytochrome b6-f complex, which mediates electron transfer between photosystem II (PSII) and photosystem I (PSI), cyclic electron flow around PSI, and state transitions. PetL is important for photoautotrophic growth as well as for electron transfer efficiency and stability of the cytochrome b6-f complex. This chain is Cytochrome b6-f complex subunit 6, found in Dioscorea elephantipes (Elephant's foot yam).